The following is a 225-amino-acid chain: Uridylate kinase (225 aa).

7–11 (KISGS) contacts ATP. UMP is bound at residue Gly44. Residues Gly45 and Arg49 each contribute to the ATP site. UMP contacts are provided by residues Asp66 and 114–120 (FQPGQST). Tyr147 and Glu150 together coordinate ATP.

The protein belongs to the UMP kinase family. Homohexamer.

The protein resides in the cytoplasm. The enzyme catalyses UMP + ATP = UDP + ADP. The protein operates within pyrimidine metabolism; CTP biosynthesis via de novo pathway; UDP from UMP (UMPK route): step 1/1. With respect to regulation, inhibited by UTP. Catalyzes the reversible phosphorylation of UMP to UDP. In Aeropyrum pernix (strain ATCC 700893 / DSM 11879 / JCM 9820 / NBRC 100138 / K1), this protein is Uridylate kinase.